A 661-amino-acid polypeptide reads, in one-letter code: Arginine--tRNA ligase, cytoplasmic (661 aa).

The residue at position 1 (M1) is an N-acetylmethionine. Residues 1 to 73 (MDGLVAQCSA…AEKRRRPTKN (73 aa)) are could be involved in the assembly of the multisynthetase complex. Residues 201-203 (SPN), H212, Y385, D389, and Q413 each bind L-arginine. Residues 202-213 (PNIAKEMHVGHL) carry the 'HIGH' region motif. The interaction with tRNA stretch occupies residues 530-544 (NTAAYLLYAFTRIRS).

It belongs to the class-I aminoacyl-tRNA synthetase family. As to quaternary structure, interacts (via N-terminus) with AIMP1 (via N-terminus); this stimulates its catalytic activity. Interacts (via N-terminus) with LARS2 (via C-terminus). Monomer. Part of a multisubunit complex that groups tRNA ligases for Arg (RARS1), Asp (DARS1), Gln (QARS1), Ile (IARS1), Leu (LARS1), Lys (KARS1), Met (MARS1) the bifunctional ligase for Glu and Pro (EPRS1) and the auxiliary subunits AIMP1/p43, AIMP2/p38 and EEF1E1/p18. Interacts with QARS1. Part of a complex composed of RARS1, QARS1 and AIMP1.

The protein localises to the cytoplasm. The protein resides in the cytosol. The catalysed reaction is tRNA(Arg) + L-arginine + ATP = L-arginyl-tRNA(Arg) + AMP + diphosphate. In terms of biological role, forms part of a macromolecular complex that catalyzes the attachment of specific amino acids to cognate tRNAs during protein synthesis. Modulates the secretion of AIMP1 and may be involved in generation of the inflammatory cytokine EMAP2 from AIMP1. The sequence is that of Arginine--tRNA ligase, cytoplasmic (RARS1) from Cricetulus griseus (Chinese hamster).